The sequence spans 291 residues: Protein-export membrane protein SecF (291 aa).

The next 6 helical transmembrane spans lie at 19–39 (LVVI…SWYV), 134–154 (LALG…FLMF), 156–176 (VFVP…ISVA), 187–209 (LGTV…LLNN), 226–246 (MRTG…MAAV), and 256–278 (AAIG…LLNL).

It belongs to the SecD/SecF family. SecF subfamily. As to quaternary structure, part of the protein translocation apparatus. Forms a complex with SecD.

It localises to the cell membrane. Functionally, involved in protein export. In Haloquadratum walsbyi (strain DSM 16790 / HBSQ001), this protein is Protein-export membrane protein SecF.